A 182-amino-acid polypeptide reads, in one-letter code: Heat shock protein beta-2 (182 aa).

The 109-residue stretch at 55-163 (PAGEGSRAGA…DTEVNEVYIS (109 aa)) folds into the sHSP domain.

The protein belongs to the small heat shock protein (HSP20) family. In terms of assembly, interacts with DMPK; may enhance its kinase activity. In terms of tissue distribution, expressed preferentially in skeletal muscle and heart but not in the lens.

The protein localises to the cytoplasm. Its subcellular location is the nucleus. In terms of biological role, may regulate the kinase DMPK. The sequence is that of Heat shock protein beta-2 (HSPB2) from Homo sapiens (Human).